The chain runs to 602 residues: MKQNINIGNVVDDGTGDYLRKGGIKINENFDELYYELGDGDVPYSAGAWKTYNASSGQTLTAEWGKSYAINTSSGRVTINLPKGTVNDYNKVIRARDVFATWNVNPVTLVAASGDTIKGSAVPVEINVRFSDLELVYCAPGRWEYVKNKQIDKITSSDISNVARKEFLVEVQGQTDFLDVFRGTSYNVNNIRVKHRGNELYYGDVFSENSDFGSPGENEGELVPLDGFNIRLRQPCNIGDTVQIETFMDGVSQWRSSYTRRQIRLLDSKLTSKTSLEGSIYVTDLSTMKSIPFSAFGLIPGEPINPNSLEVRFNGILQELAGTVGMPLFHCVGADSDDEVECSVLGGTWEQSHTDYSVETDENGIPEILHFDSVFEHGDIINITWFNNDLGTLLTKDEIIDETDNLYVSQGPGVDISGDVNLTDFDKIGWPNVEAVQSYQRAFNAVSNIFDTIYPIGTIYENAVNPNNPVTYMGFGSWKLFGQGKVLVGWNEDISDPNFALNNNDLDSGGNPSHTAGGTGGSTSVTLENANLPATETDEEVLIVDENGSVIVGGCQYDPDESGPIYTKYREAKASTNSTHTPPTSITNIQPYITVYRWIRIA.

Polar residues predominate over residues 501-512 (LNNNDLDSGGNP). The segment at 501–523 (LNNNDLDSGGNPSHTAGGTGGST) is disordered.

It belongs to the T4likevirus baseplate wedge protein gp10 family. As to quaternary structure, homotrimer; disulfide-linked. Heteromultimer with gp7; a gp10 molecule is disulfide-linked to gp7 and the other two remaining gp10 molecules form a disulfide bond. The gp10 trimer interacts with gp11 trimer and with the short tail fiber (STF) composed of the gp12 trimer. Part of the baseplate macromolecular complex which consists of gp5, gp5.4, gp27 (central spike complex); gp6, gp25, gp53 (inner baseplate); gp7, gp8 (intermediate baseplate); gp9, gp10, gp11, gp12 (peripheral); gp48 and gp54 (proximal region of the tail tube).

The protein localises to the virion. Its function is as follows. Peripheral baseplate protein that is part of the tail fiber network. Connects the short tail fibers to the baseplate. During infection, the baseplate undergoes a conformational change from a dome-shaped to a star-shaped structure. At this point, gp10 rotates and acts as a lever that unfolds the short tail fibers, which then interact with host cell surface receptors. Involved in the tail assembly. The chain is Baseplate wedge protein gp10 (10) from Escherichia coli (Bacteriophage T4).